The primary structure comprises 400 residues: Enoyl-[acyl-carrier-protein] reductase [NADH] (400 aa).

NAD(+) is bound by residues 48–53 (GASTGY), 74–75 (FE), 111–112 (DA), and 139–140 (LA). Y225 provides a ligand contact to substrate. Y235 acts as the Proton donor in catalysis. Residues K244 and 273–275 (VVT) contribute to the NAD(+) site.

The protein belongs to the TER reductase family. Monomer.

The catalysed reaction is a 2,3-saturated acyl-[ACP] + NAD(+) = a (2E)-enoyl-[ACP] + NADH + H(+). It functions in the pathway lipid metabolism; fatty acid biosynthesis. Involved in the final reduction of the elongation cycle of fatty acid synthesis (FAS II). Catalyzes the reduction of a carbon-carbon double bond in an enoyl moiety that is covalently linked to an acyl carrier protein (ACP). This chain is Enoyl-[acyl-carrier-protein] reductase [NADH], found in Burkholderia vietnamiensis (strain G4 / LMG 22486) (Burkholderia cepacia (strain R1808)).